A 167-amino-acid polypeptide reads, in one-letter code: UPF0336 protein MAP_4109 (167 aa).

A MaoC-like domain is found at 21 to 124 (GREQLRQFAL…RFGADIVVTK (104 aa)).

The protein belongs to the UPF0336 family.

This is UPF0336 protein MAP_4109 from Mycolicibacterium paratuberculosis (strain ATCC BAA-968 / K-10) (Mycobacterium paratuberculosis).